Reading from the N-terminus, the 1526-residue chain is Ig-like and fibronectin type-III domain-containing protein 2 (1526 aa).

A signal peptide spans Met1 to Gly19. The interval Asp20–Pro39 is disordered. Residues Asp20–Ser1415 lie on the Extracellular side of the membrane. The span at Thr24–Lys33 shows a compositional bias: low complexity. One can recognise an Ig-like C2-type 1 domain in the interval Pro39–Leu170. Cys61 and Cys154 are disulfide-bonded. N-linked (GlcNAc...) asparagine glycans are attached at residues Asn87, Asn143, Asn158, Asn181, Asn414, Asn427, Asn475, Asn489, Asn533, Asn590, Asn617, and Asn662. Positions Ala379 to His470 constitute a Fibronectin type-III 1 domain. Residues Ala587–Thr678 enclose the Fibronectin type-III 2 domain. One can recognise a WR1 domain in the interval Pro682–Pro724. 7 N-linked (GlcNAc...) asparagine glycosylation sites follow: Asn754, Asn871, Asn906, Asn939, Asn979, Asn1004, and Asn1049. Fibronectin type-III domains follow at residues Ala827 to Ala914 and Ala924 to Asp1020. One can recognise an Ig-like C2-type 2 domain in the interval Ala1116 to Ile1207. A disulfide bridge links Cys1137 with Cys1190. Asn1250 carries N-linked (GlcNAc...) asparagine glycosylation. The Fibronectin type-III 5 domain maps to Ala1314–Arg1406. Residues Ala1416–Leu1436 traverse the membrane as a helical segment. Over Ser1437–Thr1526 the chain is Cytoplasmic. The tract at residues Ser1485–Gly1518 is disordered. The span at Gln1495 to Asp1510 shows a compositional bias: polar residues.

Its subcellular location is the cell membrane. The sequence is that of Ig-like and fibronectin type-III domain-containing protein 2 from Caenorhabditis elegans.